A 137-amino-acid polypeptide reads, in one-letter code: Small ribosomal subunit protein uS9 (137 aa).

Positions 100–137 (ENRPPLKSEGYLTRDPRAKERKKYGLHKARKAPQYSKR) are disordered. Residues 118-137 (KERKKYGLHKARKAPQYSKR) show a composition bias toward basic residues.

It belongs to the universal ribosomal protein uS9 family.

This is Small ribosomal subunit protein uS9 from Microcystis aeruginosa (strain NIES-843 / IAM M-2473).